Reading from the N-terminus, the 277-residue chain is ATP synthase subunit delta (277 aa).

It belongs to the ATPase delta chain family. F-type ATPases have 2 components, F(1) - the catalytic core - and F(0) - the membrane proton channel. F(1) has five subunits: alpha(3), beta(3), gamma(1), delta(1), epsilon(1). F(0) has three main subunits: a(1), b(2) and c(10-14). The alpha and beta chains form an alternating ring which encloses part of the gamma chain. F(1) is attached to F(0) by a central stalk formed by the gamma and epsilon chains, while a peripheral stalk is formed by the delta and b chains.

Its subcellular location is the cell membrane. In terms of biological role, f(1)F(0) ATP synthase produces ATP from ADP in the presence of a proton or sodium gradient. F-type ATPases consist of two structural domains, F(1) containing the extramembraneous catalytic core and F(0) containing the membrane proton channel, linked together by a central stalk and a peripheral stalk. During catalysis, ATP synthesis in the catalytic domain of F(1) is coupled via a rotary mechanism of the central stalk subunits to proton translocation. Its function is as follows. This protein is part of the stalk that links CF(0) to CF(1). It either transmits conformational changes from CF(0) to CF(1) or is implicated in proton conduction. This is ATP synthase subunit delta from Bifidobacterium animalis subsp. lactis (strain AD011).